A 158-amino-acid chain; its full sequence is Small ribosomal subunit protein uS19 (158 aa).

This sequence belongs to the universal ribosomal protein uS19 family.

In terms of biological role, protein S19 forms a complex with S13 that binds strongly to the 16S ribosomal RNA. The protein is Small ribosomal subunit protein uS19 of Pyrobaculum neutrophilum (strain DSM 2338 / JCM 9278 / NBRC 100436 / V24Sta) (Thermoproteus neutrophilus).